A 262-amino-acid polypeptide reads, in one-letter code: 4-hydroxy-2-oxo-heptane-1,7-dioate aldolase (262 aa).

The active-site Proton acceptor is the His45. Residue Gln147 coordinates substrate. Glu149 provides a ligand contact to a divalent metal cation. Substrate contacts are provided by Ala174 and Asp175. Residue Asp175 coordinates a divalent metal cation.

The protein belongs to the HpcH/HpaI aldolase family. In terms of assembly, homohexamer; trimer of dimers. Requires a divalent metal cation as cofactor.

It carries out the reaction 4-hydroxy-2-oxoheptanedioate = succinate semialdehyde + pyruvate. It participates in aromatic compound metabolism; 4-hydroxyphenylacetate degradation; pyruvate and succinate semialdehyde from 4-hydroxyphenylacetate: step 7/7. Functionally, catalyzes the reversible retro-aldol cleavage of 4-hydroxy-2-ketoheptane-1,7-dioate (HKHD) to pyruvate and succinic semialdehyde. This is 4-hydroxy-2-oxo-heptane-1,7-dioate aldolase from Shigella boydii serotype 4 (strain Sb227).